The sequence spans 325 residues: MADKQRKKVILVGDGAVGSSYAFALVNQGIAQELGIVDLFKEKTQGDAEDLSHALAFTSPKKIYSADYSDASDADLVVLTSGAPQKPGETRLDLVEKNLRITKDVVTKIVASGFKGIFLVAANPVDILTYATWKFSGFPKNRVVGSGTSLDTARFRQALAEKVDVDARSIHAYIMGEHGDSEFAVWSHANVAGVKLEQWFQENDYLNEAEIVKLFESVRDAAYSIIAKKGATFYGVAVALARITKAILDDEHAVLPVSVFQDGQYGVSDCYLGQPAVVGAEGVVNPIHIPLNDAEMQKMEASGAQLKAIIDEAFAKEEFASAVKN.

Residues Val-17, Asp-38, Lys-43, Tyr-68, and 82–83 contribute to the NAD(+) site; that span reads GA. Residues Gln-85, Arg-91, and 123–126 each bind substrate; that span reads NPVD. NAD(+)-binding positions include 121 to 123 and Ser-146; that span reads AAN. 151–154 is a substrate binding site; that stretch reads DTAR. Residues Arg-156 and His-171 each contribute to the beta-D-fructose 1,6-bisphosphate site. His-178 (proton acceptor) is an active-site residue. A Phosphotyrosine modification is found at Tyr-223. Residue Thr-232 coordinates substrate.

Belongs to the LDH/MDH superfamily. LDH family. As to quaternary structure, homotetramer.

The protein resides in the cytoplasm. It catalyses the reaction (S)-lactate + NAD(+) = pyruvate + NADH + H(+). It functions in the pathway fermentation; pyruvate fermentation to lactate; (S)-lactate from pyruvate: step 1/1. With respect to regulation, allosterically activated by fructose 1,6-bisphosphate (FBP). Its function is as follows. Catalyzes the conversion of lactate to pyruvate. This is L-lactate dehydrogenase 1 from Lactococcus lactis subsp. cremoris (Streptococcus cremoris).